The primary structure comprises 157 residues: Ribosomal RNA large subunit methyltransferase H (157 aa).

S-adenosyl-L-methionine-binding positions include L73, G105, and 124–129 (LSKMTF).

Belongs to the RNA methyltransferase RlmH family. Homodimer.

The protein resides in the cytoplasm. It carries out the reaction pseudouridine(1915) in 23S rRNA + S-adenosyl-L-methionine = N(3)-methylpseudouridine(1915) in 23S rRNA + S-adenosyl-L-homocysteine + H(+). Specifically methylates the pseudouridine at position 1915 (m3Psi1915) in 23S rRNA. The chain is Ribosomal RNA large subunit methyltransferase H from Phocaeicola vulgatus (strain ATCC 8482 / DSM 1447 / JCM 5826 / CCUG 4940 / NBRC 14291 / NCTC 11154) (Bacteroides vulgatus).